We begin with the raw amino-acid sequence, 373 residues long: CXADR-like membrane protein (373 aa).

The first 18 residues, 1–18, serve as a signal peptide directing secretion; that stretch reads MSLLLLLLLVSYYVGTLG. 2 consecutive Ig-like C2-type domains span residues 19 to 127 and 135 to 224; these read THTE…VILK and PKCE…VRVT. Residues 19–235 lie on the Extracellular side of the membrane; that stretch reads THTEIKRVAE…QYVQSIGMVA (217 aa). Cystine bridges form between cysteine 35–cysteine 111 and cysteine 153–cysteine 208. Residues asparagine 74 and asparagine 197 are each glycosylated (N-linked (GlcNAc...) asparagine). Residues 236–256 traverse the membrane as a helical segment; sequence GAVTGIVAGALLIFLLVWLLI. Residues 257-373 are Cytoplasmic-facing; it reads RRKDKERYEE…PSQSRAFQTV (117 aa). Positions 264-281 are enriched in basic and acidic residues; sequence YEEEERPNEIREDAEAPK. Residues 264 to 373 are disordered; the sequence is YEEEERPNEI…PSQSRAFQTV (110 aa). A compositionally biased stretch (low complexity) spans 288-314; the sequence is SSSSSGSRSSRSGSSSTRSTANSASRS. Over residues 355–373 the composition is skewed to polar residues; the sequence is KAETTPSMIPSQSRAFQTV.

Predominantly expressed in epithelial cells within different tissues and in the white adipose tissue. Expressed at high levels in small intestine and placenta, at intermediate levels in the heart, skeletal muscle, colon, spleen, kidney and lung and at low levels in the liver and peripheral blood leukocytes. Highly abundant in the intestine during embryo and fetal development (at protein level).

Its subcellular location is the cell junction. It localises to the tight junction. The protein localises to the cell membrane. Its function is as follows. May be involved in the cell-cell adhesion. May play a role in adipocyte differentiation and development of obesity. Is required for normal small intestine development. This is CXADR-like membrane protein (CLMP) from Homo sapiens (Human).